The following is a 185-amino-acid chain: Large ribosomal subunit protein uL5 (185 aa).

It belongs to the universal ribosomal protein uL5 family. Part of the 50S ribosomal subunit; part of the 5S rRNA/L5/L18/L25 subcomplex. Contacts the 5S rRNA and the P site tRNA. Forms a bridge to the 30S subunit in the 70S ribosome.

Its function is as follows. This is one of the proteins that bind and probably mediate the attachment of the 5S RNA into the large ribosomal subunit, where it forms part of the central protuberance. In the 70S ribosome it contacts protein S13 of the 30S subunit (bridge B1b), connecting the 2 subunits; this bridge is implicated in subunit movement. Contacts the P site tRNA; the 5S rRNA and some of its associated proteins might help stabilize positioning of ribosome-bound tRNAs. In Sinorhizobium medicae (strain WSM419) (Ensifer medicae), this protein is Large ribosomal subunit protein uL5.